We begin with the raw amino-acid sequence, 265 residues long: uncharacterized protein (265 aa).

2 disordered regions span residues 162-183 (VTKKNASNSNGNEGTLTVNNDQ) and 196-239 (AKTN…DKEI). Polar residues-rich tracts occupy residues 165–183 (KNASNSNGNEGTLTVNNDQ) and 213–233 (QSTSLIQLKEGSANTTEGNAS).

Belongs to the MG185/MG260 family.

This is an uncharacterized protein from Mycoplasma pneumoniae (strain ATCC 29342 / M129 / Subtype 1) (Mycoplasmoides pneumoniae).